Consider the following 1377-residue polypeptide: MQYLLSKKRIRKNFGKINLVSSIPNLIEVQKNSYNKEFLQLGVPVDCRENKGLQGVLNSIFPIHDLDGSAILEFVRYDFDEPKYDVEECIQRGLSYTAALKITLSLIVLDDSDKSDPKEIKGIKEQAVYFGDIPLMTANGTFVINGTERVVVSQMHRSPGVFFDHDDGKTHSTGKLIYSARVIPYRGSWLDFEFDAKDLLYFRIDRKRKLYVTTLLMALGMSSHDILNFYYESATYKKYKKSENGWIVDFLPELVSTKHLAYDLIDAQTGKVLLNAGQKITFRIAKMLADKGVKQILVKNDSLVGKLLAEDLVNNQTGEVLLGVGEEITNDILTIVNDLQITTVKVLAVGGQCGPYVRNTLFLDKNKDQKSSLVEIFRVLKPGEMATTAASRGLLDSLLFDNNRYDLSEVGRIKINSRLNLDIDLKNTCITVEDIKKIIKLLVDIKDGKALVDDIDHLGNRRVRSVGELVENQFRTGLVRIAKFIVERIGSVEIDAVVPNDLVNAKLLTSVIKEFFGTSQLSQFMDQTNALSQITHIRRLSALGPGGLNRDRAALEVRDVHPTHYGRICPIETPEGQNIGLINSLAIFAKINRYGFIESPYRRVINRRVTDEVVYLSALEEGRYKIAQADTSLCTNDCLIDGLVSCRYDGNFVMVLAQEVDFIDLTPMQVVSVAASMIPFLENDDANRALMGANMQRQAVPLLKSQAPLVGTGIESVVAHDSGTVVAALHDGIVEQVDSTRIVVKTSVKKDAGAPGVDIYNLKKFQRSNYNTCINQKVLVNVGDIVKKGDVIADGVATNKGEIALGRNVLVAFIAWNGYTFEDSILVSERIVKEDIYTSIHIEELELVARDTRLGPEEITRDIPNVNDESLRHLDEVGIVNIGAKVRTGDILVGKVTPKSESPVTPEEKLLRAIFGEKASEVKDSSLYVPPGITGTVIDVRVFSRRGIDKDERTLAIEKQKIRKLVKDYEDELAVIQHFTIVRVKELLVGQVAACSLDSIIIGDKLDEAMLNKLTNEQLLKLKADNSSIMDEISEIKCHYETTRAQLTSQLNSKIEKIQCGDDLPQGALRVVKVFIAIKHRLQPGDKMAGRHGNKGVVSKVVPEEDMPFLEDGTVVDIVLNPLGLPARMNVGQILETHLGWAGVNLGRKIGKMVDDYYSGNNQCTDEIRKFVKKIYANNSIADTIDQVNDQQLIEICQELRQGIYFSTPVFDGAKIADIKQMLELADVDKSGQVRLIDGRTGEYFDRRCTVGYQYLLKLHHLVDEKIHARSIGPYSLVTQQPLGGKSHFGGQRFGEMECWALEAYGAAYTLQELLTTKSDSVEGRIKMYQAIIRGNNNFVSGVPESLNVMIKELRSLCLNIQLEENDEEDENEDENY.

The protein belongs to the RNA polymerase beta chain family. As to quaternary structure, the RNAP catalytic core consists of 2 alpha, 1 beta, 1 beta' and 1 omega subunit. When a sigma factor is associated with the core the holoenzyme is formed, which can initiate transcription.

The catalysed reaction is RNA(n) + a ribonucleoside 5'-triphosphate = RNA(n+1) + diphosphate. DNA-dependent RNA polymerase catalyzes the transcription of DNA into RNA using the four ribonucleoside triphosphates as substrates. The protein is DNA-directed RNA polymerase subunit beta of Orientia tsutsugamushi (strain Boryong) (Rickettsia tsutsugamushi).